Reading from the N-terminus, the 397-residue chain is 2,3,4,5-tetrahydropyridine-2,6-dicarboxylate N-succinyltransferase (397 aa).

Residue Glu265 is the Acyl-anhydride intermediate of the active site. Residues Arg267, Gly282, Ser285, Ala308, 323–324, Gly331, Lys360, and 373–376 contribute to the succinyl-CoA site; these read DA and RQNS.

It belongs to the type 2 tetrahydrodipicolinate N-succinyltransferase family. In terms of assembly, homotrimer.

The protein localises to the cytoplasm. It catalyses the reaction (S)-2,3,4,5-tetrahydrodipicolinate + succinyl-CoA + H2O = (S)-2-succinylamino-6-oxoheptanedioate + CoA. It participates in amino-acid biosynthesis; L-lysine biosynthesis via DAP pathway; LL-2,6-diaminopimelate from (S)-tetrahydrodipicolinate (succinylase route): step 1/3. In terms of biological role, catalyzes the conversion of the cyclic tetrahydrodipicolinate (THDP) into the acyclic N-succinyl-L-2-amino-6-oxopimelate using succinyl-CoA. This chain is 2,3,4,5-tetrahydropyridine-2,6-dicarboxylate N-succinyltransferase, found in Sulfurovum sp. (strain NBC37-1).